The following is a 223-amino-acid chain: Golgi SNAP receptor complex member 1 (223 aa).

Residue Ser2 is modified to N-acetylserine. At 2–204 (SSQPSFVTIR…MKINTRRKKN (203 aa)) the chain is on the cytoplasmic side. A Phosphoserine modification is found at Ser164. A helical; Anchor for type IV membrane protein transmembrane segment spans residues 205-222 (AFVLATITTLCILFLFFT). Residue Trp223 is a topological domain, vesicular.

It belongs to the GOSR1 family. As to quaternary structure, component of several multiprotein Golgi SNARE complexes. Identified in a Golgi SNARE complex consisting of t-SNARES SED5, YKT6, and the v-SNARE SFT1. Interacts with BET1. Interacts with BOS1. Interacts with SEC22. Interacts with PEP12. Interacts with self.

The protein resides in the golgi apparatus membrane. Functionally, involved in transport from the ER to the Golgi apparatus as well as in intra-Golgi transport. It belongs to a super-family of proteins called t-SNAREs or soluble NSF (N-ethylmaleimide-sensitive factor) attachment protein receptor. Rescues alpha-factor maturation defects. The chain is Golgi SNAP receptor complex member 1 (GOS1) from Saccharomyces cerevisiae (strain ATCC 204508 / S288c) (Baker's yeast).